The primary structure comprises 551 residues: Probable malate:quinone oxidoreductase (551 aa).

A compositionally biased stretch (low complexity) spans 525–544; that stretch reads QTAAAAPQAQPQLKPQPDAK. Residues 525-551 are disordered; the sequence is QTAAAAPQAQPQLKPQPDAKPVADIAL.

This sequence belongs to the MQO family. Requires FAD as cofactor.

It carries out the reaction (S)-malate + a quinone = a quinol + oxaloacetate. Its pathway is carbohydrate metabolism; tricarboxylic acid cycle; oxaloacetate from (S)-malate (quinone route): step 1/1. This Enterobacter sp. (strain 638) protein is Probable malate:quinone oxidoreductase.